A 359-amino-acid chain; its full sequence is Guanine nucleotide-binding protein alpha-4 subunit (359 aa).

Residue Gly-2 is the site of N-myristoyl glycine attachment. Cys-3 carries S-palmitoyl cysteine lipidation. Residues Gly-31 to Tyr-359 enclose the G-alpha domain. The segment at Lys-34 to Thr-47 is G1 motif. GTP contacts are provided by residues Gly-39–Ser-46, Leu-178–Ser-184, Asp-203–Gln-207, Asn-272–Asp-275, and Ala-331. Residue Ser-46 coordinates Mg(2+). Residues Asp-176–Ser-184 form a G2 motif region. The interval Phe-199 to Arg-208 is G3 motif. The tract at residues Ile-268–Asp-275 is G4 motif. The G5 motif stretch occupies residues Thr-329–Thr-334.

Belongs to the G-alpha family. G(i/o/t/z) subfamily. G proteins are composed of 3 units; alpha, beta and gamma. The alpha chain contains the guanine nucleotide binding site. In terms of tissue distribution, expressed in ASI neurons.

In terms of biological role, guanine nucleotide-binding proteins (G proteins) are involved as modulators or transducers in various transmembrane signaling systems. Acts in concert with npr-15 to activate TGF-beta-like daf-7 secretion in the ASI neuron, thereby promoting larval development and inhibition of dauer diapause. The sequence is that of Guanine nucleotide-binding protein alpha-4 subunit (gpa-4) from Caenorhabditis elegans.